A 337-amino-acid chain; its full sequence is Eukaryotic translation initiation factor 3 subunit H (337 aa).

In terms of domain architecture, MPN spans 21-153 (VQCDGLAVMK…LKAYRLTPQA (133 aa)).

The protein belongs to the eIF-3 subunit H family. Component of the eukaryotic translation initiation factor 3 (eIF-3) complex.

The protein resides in the cytoplasm. Functionally, component of the eukaryotic translation initiation factor 3 (eIF-3) complex, which is involved in protein synthesis of a specialized repertoire of mRNAs and, together with other initiation factors, stimulates binding of mRNA and methionyl-tRNAi to the 40S ribosome. The eIF-3 complex specifically targets and initiates translation of a subset of mRNAs involved in cell proliferation. This Bombyx mori (Silk moth) protein is Eukaryotic translation initiation factor 3 subunit H.